A 210-amino-acid polypeptide reads, in one-letter code: IGHVAHGKSTLCKVLTGVDPIKFAAEKVNNITIKLGFANAKIFECKDCAAPKNYFSQKSSSPDQPPCPTCKGTHTQLLRHISIIDCPGHHDYMTTMLSGVAAMDGTLLLISAEQRCPQEQTREHFQAIQATGQKKIIIAQNKIDLVTEQQAQNNYQEIQAFVHGISDINVVPISAIQNLNIDYILKHLVETITPPRRNLKAHPRFTIIRS.

The 196-residue stretch at 1-196 (IGHVAHGKST…HLVETITPPR (196 aa)) folds into the tr-type G domain. Residues 2 to 9 (GHVAHGKS) form a G1 region. Residue 5–10 (AHGKST) coordinates GTP. The segment at 30 to 34 (NITIK) is G2. The interval 85-88 (DCPG) is G3. GTP contacts are provided by residues 141–144 (NKID) and 174–176 (SAI). The tract at residues 141–144 (NKID) is G4. The segment at 174 to 176 (SAI) is G5.

This sequence belongs to the TRAFAC class translation factor GTPase superfamily. Classic translation factor GTPase family. EIF2G subfamily. As to quaternary structure, eukaryotic translation initiation factor 2 eIF2 is a heterotrimeric complex composed of an alpha, a beta and a gamma subunit. The factors eIF-1, eIF-2, eIF-3, TIF5/eIF-5 and methionyl-tRNAi form a multifactor complex (MFC) that may bind to the 40S ribosome.

It is found in the cytoplasm. The protein resides in the cytosol. The catalysed reaction is GTP + H2O = GDP + phosphate + H(+). In terms of biological role, as a subunit of eukaryotic initiation factor 2 eIF2, involved in the early steps of protein synthesis. In the presence of GTP, eIF-2 forms a ternary complex with initiator tRNA Met-tRNAi and then recruits the 40S ribosomal complex and initiation factors eIF-1, eIF-1A and eIF-3 to form the 43S pre-initiation complex (43S PIC), a step that determines the rate of protein translation. The 43S PIC binds to mRNA and scans downstream to the initiation codon, where it forms a 48S initiation complex by codon-anticodon base pairing. This leads to the displacement of eIF-1 to allow GTPase-activating protein (GAP) eIF-5-mediated hydrolysis of eIF2-bound GTP. Hydrolysis of GTP and release of Pi, which makes GTP hydrolysis irreversible, causes the release of the eIF-2-GDP binary complex from the 40S subunit, an event that is essential for the subsequent joining of the 60S ribosomal subunit to form an elongation-competent 80S ribosome. In order for eIF-2 to recycle and catalyze another round of initiation, the GDP bound to eIF-2 must be exchanged with GTP by way of a reaction catalyzed by GDP-GTP exchange factor (GEF) eIF-2B. The chain is Eukaryotic translation initiation factor 2 subunit gamma from Spironucleus vortens.